A 307-amino-acid chain; its full sequence is Phosphoribosylaminoimidazole-succinocarboxamide synthase (307 aa).

Belongs to the SAICAR synthetase family.

It carries out the reaction 5-amino-1-(5-phospho-D-ribosyl)imidazole-4-carboxylate + L-aspartate + ATP = (2S)-2-[5-amino-1-(5-phospho-beta-D-ribosyl)imidazole-4-carboxamido]succinate + ADP + phosphate + 2 H(+). It participates in purine metabolism; IMP biosynthesis via de novo pathway; 5-amino-1-(5-phospho-D-ribosyl)imidazole-4-carboxamide from 5-amino-1-(5-phospho-D-ribosyl)imidazole-4-carboxylate: step 1/2. In Thermobifida fusca (strain YX), this protein is Phosphoribosylaminoimidazole-succinocarboxamide synthase.